Consider the following 353-residue polypeptide: Sorbitol dehydrogenase (353 aa).

Zn(2+) is bound at residue C45. Residue Y51 coordinates substrate. H70 and E71 together coordinate Zn(2+). E156 contacts substrate. Residues V184, D204, R209, 271–273, and 296–298 contribute to the NAD(+) site; these read VGL and IFR. Residues R298 and Y299 each contribute to the substrate site.

Belongs to the zinc-containing alcohol dehydrogenase family. Homotetramer. Requires Zn(2+) as cofactor.

The catalysed reaction is keto-D-fructose + NADH + H(+) = D-sorbitol + NAD(+). It carries out the reaction xylitol + NAD(+) = D-xylulose + NADH + H(+). The enzyme catalyses L-iditol + NAD(+) = keto-L-sorbose + NADH + H(+). Polyol dehydrogenase that catalyzes the NAD(+)-dependent oxidation of various sugar alcohols. Is mostly active with D-sorbitol (D-glucitol), xylitol and L-iditol as substrates, leading to the C2-oxidized products D-fructose, D-xylulose and L-sorbose, respectively. This chain is Sorbitol dehydrogenase, found in Bacillus subtilis (strain 168).